The primary structure comprises 610 residues: GPI transamidase component GPI16 (610 aa).

The first 19 residues, 1–19 (MILTLAYFMLGTLLLGVFA), serve as a signal peptide directing secretion. At 20–551 (EDTVSQIGIN…STPDFSMPYN (532 aa)) the chain is on the lumenal side. Residue asparagine 184 is glycosylated (N-linked (GlcNAc...) asparagine). The chain crosses the membrane as a helical span at residues 552 to 572 (VIILTSTIMGLIFGMLYNLMV). Residues 573–610 (KRMVTVEEADKITLQSGLKYKLLKLKEKFLGKKKTKTD) are Cytoplasmic-facing.

This sequence belongs to the PIGT family. In terms of assembly, forms a complex with CDC91, GPI17, GPI8 and GAA1. Post-translationally, the disulfide bond between GPI8 and GPI16 is important for normal enzyme activity.

The protein resides in the endoplasmic reticulum membrane. It functions in the pathway glycolipid biosynthesis; glycosylphosphatidylinositol-anchor biosynthesis. Component of the GPI transamidase complex. Involved in transfer of GPI to proteins. The protein is GPI transamidase component GPI16 (GPI16) of Saccharomyces cerevisiae (strain ATCC 204508 / S288c) (Baker's yeast).